A 494-amino-acid chain; its full sequence is Pre-hexon-linking protein IIIa (494 aa).

Residues 1–101 (MAALSPTVRA…ALLQRVGRYN (101 aa)) form a peripentonal hexon-tethering domain region. The interval 132-245 (GSLVALNGFL…FTDSRTVNGD (114 aa)) is binding to hexon-linking protein. T268 carries the post-translational modification Phosphothreonine; by host. Residues S439 and S456 each carry the phosphoserine; by host modification. The propeptide occupies 484-494 (TNPFKHLQPQF).

The protein belongs to the adenoviridae hexon-linking protein IIIa family. In terms of assembly, interacts with hexon proteins; this interaction tethers the peripentonal hexons to hexons situated in the facet. Interacts with the penton protein (via N-terminus). Interacts with packaging protein 3; this interaction is required to promote correct genome packaging. In terms of processing, cleaved near the C-terminus by the viral protease during virion maturation to form the mature protein.

It localises to the virion. The protein resides in the host nucleus. Functionally, structural component of the virion that acts as a cement protein on the capsid exterior which mediates the interactions between the hexons, including the peripentonal hexons, and reaches all the way to the penton vertices. Two hexon linking proteins IIIa, one from each facet, stabilize the unique edge interface between a pair of facets. As the virus enters the host cell, hexon linking proteins IIIa are shed concomitant with virion acidification in the endosome. During virus assembly, seems to play a role in the serotype specificity of the packaging of viral DNA via its interaction with packaging protein 3. This is Pre-hexon-linking protein IIIa from Murine adenovirus A serotype 1 (MAdV-1).